The following is a 1355-amino-acid chain: MTNEKMIFRNRVVDKGQLRNLISWAFTHYGTARTAVMADKLKDLGFRYATRAGVSISVDDLMVPPSKRSLLEAAEEEIRATEVRYQRGEITEVERFQKVIDTWNGTSEALKDEVVTHFKQTNPLNSVYMMAFSGARGNISQVRQLVGMRGLMADPQGEIIDLPIKTNFREGLTVTEYIISSYGARKGLVDTALRTADSGYLTRRLVDVSQDVIIREIDCGTTRGIPVRPMTEGSKTLIKLSTRLLGRVVGEDVIHPKTKEVIAARNTPISDDLAKEIEKAGVAEVVVRSPLTCEAARSVCQHCYGWSLAHAKMVDLGEAVGIIAAQSIGEPGTQLTMRTFHTGGVFTGEVAQQVRSKMDGTIKLPRKLRTRTHRTRHGEDALFVESNGIMILEPRKEGSETPAPQEIHVTQGSTIYIVDGQQVKQGQLLAEVALGGRTTRTNTEKAVKDVASDLAGEVKFAEVVPEQKTDRQGNTTTTAARGGLIWILSGEVYNLPPGAELVVKNGDRVETNGVLAETKLTTIHGGVVRLPEATPGKSTREIEIITASVVLDQATVTVQSSQGRNNYLITTGNNQVFNLRATPGTKVQNGQVVAELIDDRYRTTTGGFLKFAGVEVQKKGKAKLGYEVVQGGTLLWIPEETHEVNKDISLLLVEDGQFVEAGTEVVKDIFCQNSGVVEVTQKNDILREVVVKPGELLMVDDPEAVIGRDNTLLQPGEELLGQVATELRYIQYVESPEGPALLSRPVVEFAVPSNPDVPSTTSVSQQTGRSIQMRAVQRLPYKDSERVKSVEGVELLRTQLVLEIEQEGEQEHNASPLAADIELIPDPEDADVQRLQLVILESLVLRRDIAADATQGSTQTSLEVKDGDTIVPGSVVARTQILSKEGGIVRGVQKGSEAVRRCLVLRHSDMTTLNTSAKPKVKAGDLIVAGTELAPGVFAEESGQIVAVKNAGESTTTQDAALSTQNYAVTIRAGRPYRVSPGAVLQIEDGDLVQRGDNLVLLVFERAKTGDIIQGLPRIEELLEARKPKEACILAKRGGEVKVVYGDGDEAIAIKVIESNGVVTDYPLGPGQNLAMPDGSVVPAGQPLSDGPSNPHEILEVFFSLGSEDGVYACASHALQKVQTFLVNEVQMVYQSQGIDIADKHIEVIVRQMTNKVRIDDGGDTTMLPGELVELRQVEQVNEAMAITGGARAQYTPVLLGITKASLNTDSFISAASFQETTRVLTEAAIEGKSDWLRGLKENVIIGRLIPAGTGYNTYDEPGMLEDYSTLETTSVLDETDDPLDMVLDDRTARAYNLDSPGLAETGFSNRRSILDDDELIADEIHDLVEAEVEVDDEVDDDYEDDDEDDDDYED.

The Zn(2+) site is built by Cys-219, Cys-293, Cys-300, and Cys-303. Residues 1331–1355 are disordered; that stretch reads AEVEVDDEVDDDYEDDDEDDDDYED.

It belongs to the RNA polymerase beta' chain family. RpoC2 subfamily. As to quaternary structure, in cyanobacteria the RNAP catalytic core is composed of 2 alpha, 1 beta, 1 beta', 1 gamma and 1 omega subunit. When a sigma factor is associated with the core the holoenzyme is formed, which can initiate transcription. It depends on Zn(2+) as a cofactor.

The catalysed reaction is RNA(n) + a ribonucleoside 5'-triphosphate = RNA(n+1) + diphosphate. Functionally, DNA-dependent RNA polymerase catalyzes the transcription of DNA into RNA using the four ribonucleoside triphosphates as substrates. This Trichormus variabilis (strain ATCC 29413 / PCC 7937) (Anabaena variabilis) protein is DNA-directed RNA polymerase subunit beta'.